Consider the following 339-residue polypeptide: MSLQVQPQVSLKPFNTFGVDVRAQLFAEAHSDADVREALAYASAHDVPLLVIGGGSNLLLTADIPALVLRMASRGIRVISDDGNRVVIEAEAGEPWHPFVQHTLAQGFSGLENLSLIPGTVGAAPMQNIGAYGVEIKDVFAGLTALDRQTGELRDFSLEECRFAYRDSVFKQQPGRWLILRVRFALNRVAHLHLEYGPVRQRLTEQGIEQPTPTDVSRAICSIRSEKLPDPAVLGNAGSFFKNPLVSAAVVAQIKAQHPDLVAYAQPDGQMKLAAGWLIERAGWKGFREADAGVHKLQALVLVNYGAATGLQLLDLAQRIQKDIAERFNVELEMEPNRY.

Residues 19-189 (VDVRAQLFAE…LRVRFALNRV (171 aa)) enclose the FAD-binding PCMH-type domain. Arginine 166 is an active-site residue. Serine 239 acts as the Proton donor in catalysis. Residue glutamate 335 is part of the active site.

This sequence belongs to the MurB family. FAD serves as cofactor.

Its subcellular location is the cytoplasm. It catalyses the reaction UDP-N-acetyl-alpha-D-muramate + NADP(+) = UDP-N-acetyl-3-O-(1-carboxyvinyl)-alpha-D-glucosamine + NADPH + H(+). Its pathway is cell wall biogenesis; peptidoglycan biosynthesis. Cell wall formation. The chain is UDP-N-acetylenolpyruvoylglucosamine reductase from Pseudomonas fluorescens (strain Pf0-1).